We begin with the raw amino-acid sequence, 208 residues long: Uracil phosphoribosyltransferase (208 aa).

5-phospho-alpha-D-ribose 1-diphosphate-binding positions include arginine 78, arginine 103, and 130-138; that span reads DPMFATGGT. Residues isoleucine 193 and 198–200 each bind uracil; that span reads GDA. Position 199 (aspartate 199) interacts with 5-phospho-alpha-D-ribose 1-diphosphate.

The protein belongs to the UPRTase family. It depends on Mg(2+) as a cofactor.

The enzyme catalyses UMP + diphosphate = 5-phospho-alpha-D-ribose 1-diphosphate + uracil. It participates in pyrimidine metabolism; UMP biosynthesis via salvage pathway; UMP from uracil: step 1/1. Allosterically activated by GTP. Catalyzes the conversion of uracil and 5-phospho-alpha-D-ribose 1-diphosphate (PRPP) to UMP and diphosphate. The polypeptide is Uracil phosphoribosyltransferase (Campylobacter concisus (strain 13826)).